Here is a 199-residue protein sequence, read N- to C-terminus: Recombination protein RecR (199 aa).

The C4-type zinc finger occupies 57 to 72 (CRSCRTFTEESHCPIC). One can recognise a Toprim domain in the interval 81–176 (EQICVVETPA…SVSRIAHGVP (96 aa)).

The protein belongs to the RecR family.

Its function is as follows. May play a role in DNA repair. It seems to be involved in an RecBC-independent recombinational process of DNA repair. It may act with RecF and RecO. The polypeptide is Recombination protein RecR (Shewanella sediminis (strain HAW-EB3)).